Here is a 355-residue protein sequence, read N- to C-terminus: Uroporphyrinogen decarboxylase (355 aa).

Substrate is bound by residues Arg36–Arg40, Asp85, Tyr160, Ser215, and His334.

This sequence belongs to the uroporphyrinogen decarboxylase family. In terms of assembly, homodimer.

The protein resides in the cytoplasm. It catalyses the reaction uroporphyrinogen III + 4 H(+) = coproporphyrinogen III + 4 CO2. Its pathway is porphyrin-containing compound metabolism; protoporphyrin-IX biosynthesis; coproporphyrinogen-III from 5-aminolevulinate: step 4/4. Functionally, catalyzes the decarboxylation of four acetate groups of uroporphyrinogen-III to yield coproporphyrinogen-III. This Rhodococcus opacus (strain B4) protein is Uroporphyrinogen decarboxylase.